A 621-amino-acid chain; its full sequence is Anthranilate synthase alpha subunit 2, chloroplastic (621 aa).

The N-terminal 87 residues, 1 to 87 (MSAVSISAVK…SEEQFTKFKK (87 aa)), are a transit peptide targeting the chloroplast.

It belongs to the anthranilate synthase component I family. Heterotetramer consisting of two non-identical subunits: a beta subunit and a large alpha subunit.

The protein localises to the plastid. Its subcellular location is the chloroplast. The catalysed reaction is chorismate + L-glutamine = anthranilate + pyruvate + L-glutamate + H(+). It functions in the pathway amino-acid biosynthesis; L-tryptophan biosynthesis; L-tryptophan from chorismate: step 1/5. Its activity is regulated as follows. Feedback inhibition by tryptophan. In terms of biological role, part of a heterotetrameric complex that catalyzes the two-step biosynthesis of anthranilate, an intermediate in the biosynthesis of L-tryptophan. In the first step, the glutamine-binding beta subunit of anthranilate synthase (AS) provides the glutamine amidotransferase activity which generates ammonia as a substrate that, along with chorismate, is used in the second step, catalyzed by the large alpha subunit of AS to produce anthranilate. The polypeptide is Anthranilate synthase alpha subunit 2, chloroplastic (ASA2) (Arabidopsis thaliana (Mouse-ear cress)).